A 140-amino-acid polypeptide reads, in one-letter code: Nucleoside diphosphate kinase (140 aa).

Residues K11, F59, R87, T93, R104, and N114 each contribute to the ATP site. H117 serves as the catalytic Pros-phosphohistidine intermediate.

Belongs to the NDK family. In terms of assembly, homotetramer. Mg(2+) is required as a cofactor.

It is found in the cytoplasm. The catalysed reaction is a 2'-deoxyribonucleoside 5'-diphosphate + ATP = a 2'-deoxyribonucleoside 5'-triphosphate + ADP. It carries out the reaction a ribonucleoside 5'-diphosphate + ATP = a ribonucleoside 5'-triphosphate + ADP. In terms of biological role, major role in the synthesis of nucleoside triphosphates other than ATP. The ATP gamma phosphate is transferred to the NDP beta phosphate via a ping-pong mechanism, using a phosphorylated active-site intermediate. The chain is Nucleoside diphosphate kinase from Rickettsia prowazekii (strain Madrid E).